Reading from the N-terminus, the 281-residue chain is Formamidopyrimidine-DNA glycosylase (281 aa).

The Schiff-base intermediate with DNA role is filled by Pro2. Glu3 functions as the Proton donor in the catalytic mechanism. The active-site Proton donor; for beta-elimination activity is the Lys58. The DNA site is built by His100, Arg119, and Arg160. The segment at 245–281 (RVYGREGAPCPTPGCTGTVQRIVQSGRSSFFCPLCQQ) adopts an FPG-type zinc-finger fold. Arg271 (proton donor; for delta-elimination activity) is an active-site residue.

This sequence belongs to the FPG family. As to quaternary structure, monomer. Zn(2+) serves as cofactor.

The catalysed reaction is Hydrolysis of DNA containing ring-opened 7-methylguanine residues, releasing 2,6-diamino-4-hydroxy-5-(N-methyl)formamidopyrimidine.. The enzyme catalyses 2'-deoxyribonucleotide-(2'-deoxyribose 5'-phosphate)-2'-deoxyribonucleotide-DNA = a 3'-end 2'-deoxyribonucleotide-(2,3-dehydro-2,3-deoxyribose 5'-phosphate)-DNA + a 5'-end 5'-phospho-2'-deoxyribonucleoside-DNA + H(+). Functionally, involved in base excision repair of DNA damaged by oxidation or by mutagenic agents. Acts as a DNA glycosylase that recognizes and removes damaged bases. Has a preference for oxidized purines, such as 7,8-dihydro-8-oxoguanine (8-oxoG). Has AP (apurinic/apyrimidinic) lyase activity and introduces nicks in the DNA strand. Cleaves the DNA backbone by beta-delta elimination to generate a single-strand break at the site of the removed base with both 3'- and 5'-phosphates. In Paracoccus denitrificans (strain Pd 1222), this protein is Formamidopyrimidine-DNA glycosylase.